The primary structure comprises 230 residues: RNA chaperone ProQ (230 aa).

Positions 106–181 are disordered; sequence AKARVQAQRA…EERHTPVSDI (76 aa). Over residues 146-155 the composition is skewed to basic and acidic residues; it reads RRKDNAERKP. Low complexity predominate over residues 158 to 167; sequence AKPAAAAKPS.

This sequence belongs to the ProQ family.

Its subcellular location is the cytoplasm. In terms of biological role, RNA chaperone with significant RNA binding, RNA strand exchange and RNA duplexing activities. May regulate ProP activity through an RNA-based, post-transcriptional mechanism. This is RNA chaperone ProQ from Cronobacter sakazakii (strain ATCC BAA-894) (Enterobacter sakazakii).